We begin with the raw amino-acid sequence, 369 residues long: Endophilin-A (369 aa).

One can recognise a BAR domain in the interval 18–248 (TEKMGGAEGT…LQEKRSEAES (231 aa)). A coiled-coil region spans residues 227–247 (QCADVLRGLQETLQEKRSEAE). The interval 266 to 295 (GGGGGLNEDGTPSHISSSASPLPSPMRSPA) is disordered. Over residues 277 to 294 (PSHISSSASPLPSPMRSP) the composition is skewed to low complexity. One can recognise an SH3 domain in the interval 305 to 364 (QQQPCCQALYDFEPENPGELAFKENDIITLLNRVDDNWFEGAVNGRTGYFPQSYVQVQVP).

The protein belongs to the endophilin family.

It is found in the cytoplasm. The protein resides in the membrane. Required presynaptically at the neuromuscular junction. Implicated in synaptic vesicle endocytosis. The chain is Endophilin-A from Drosophila erecta (Fruit fly).